The chain runs to 652 residues: Acetyl-coenzyme A synthetase (652 aa).

CoA contacts are provided by residues 191-194, T311, and N335; that span reads RAGR. Residues 387–389, 411–416, D500, and R515 contribute to the ATP site; these read GEP and DTWWQT. CoA is bound at residue S523. Residue R526 participates in ATP binding. 3 residues coordinate Mg(2+): V537, H539, and I542. R584 contributes to the CoA binding site. K609 bears the N6-acetyllysine mark.

This sequence belongs to the ATP-dependent AMP-binding enzyme family. It depends on Mg(2+) as a cofactor. Post-translationally, acetylated. Deacetylation by the SIR2-homolog deacetylase activates the enzyme.

The catalysed reaction is acetate + ATP + CoA = acetyl-CoA + AMP + diphosphate. Its function is as follows. Catalyzes the conversion of acetate into acetyl-CoA (AcCoA), an essential intermediate at the junction of anabolic and catabolic pathways. Acs undergoes a two-step reaction. In the first half reaction, Acs combines acetate with ATP to form acetyl-adenylate (AcAMP) intermediate. In the second half reaction, it can then transfer the acetyl group from AcAMP to the sulfhydryl group of CoA, forming the product AcCoA. In terms of biological role, enables the cell to use acetate during aerobic growth to generate energy via the TCA cycle, and biosynthetic compounds via the glyoxylate shunt. Acetylates CheY, the response regulator involved in flagellar movement and chemotaxis. This Sodalis glossinidius (strain morsitans) protein is Acetyl-coenzyme A synthetase.